The following is a 170-amino-acid chain: Cytochrome b6-f complex subunit 4 (170 aa).

Transmembrane regions (helical) follow at residues 46–66 (LLFMFPVVILGTIGVIVGLAV), 105–125 (LLGIALMSAIPVGLLFVPFIE), and 141–161 (TVFLIGTLVTLYLGIGATLPL).

It belongs to the cytochrome b family. PetD subfamily. In terms of assembly, the 4 large subunits of the cytochrome b6-f complex are cytochrome b6, subunit IV (17 kDa polypeptide, PetD), cytochrome f and the Rieske protein, while the 4 small subunits are PetG, PetL, PetM and PetN. The complex functions as a dimer.

It localises to the cellular thylakoid membrane. Functionally, component of the cytochrome b6-f complex, which mediates electron transfer between photosystem II (PSII) and photosystem I (PSI), cyclic electron flow around PSI, and state transitions. This chain is Cytochrome b6-f complex subunit 4, found in Synechococcus sp. (strain JA-3-3Ab) (Cyanobacteria bacterium Yellowstone A-Prime).